Here is a 60-residue protein sequence, read N- to C-terminus: Large ribosomal subunit protein bL33 (60 aa).

Belongs to the bacterial ribosomal protein bL33 family.

The polypeptide is Large ribosomal subunit protein bL33 (Flavobacterium johnsoniae (strain ATCC 17061 / DSM 2064 / JCM 8514 / BCRC 14874 / CCUG 350202 / NBRC 14942 / NCIMB 11054 / UW101) (Cytophaga johnsonae)).